The primary structure comprises 163 residues: Interleukin-17F (163 aa).

A signal peptide spans 1–30; it reads MTVKTLHGPAMVKYLLLSILGLAFLSEAAA. Residue Asn83 is glycosylated (N-linked (GlcNAc...) asparagine). 2 disulfides stabilise this stretch: Cys102–Cys152 and Cys107–Cys154.

It belongs to the IL-17 family. Homodimer; disulfide-linked. Heterodimer with IL17A (IL17A-IL17F). Forms complexes with IL17RA and IL17RC receptors with 2:1 binding stoichiometry: two receptor chains for one interleukin molecule. IL17F homodimer forms predominantly complexes with IL17RC homodimer, whereas IL17A-IL17F favors complexes with IL17RA-IL17RC. IL17RA and IL17RC chains cannot distinguish between IL17A and IL17F molecules, potentially enabling the formation of topologically distinct complexes. As to expression, expressed in T-helper 1 and T-helper 2 cells, basophils and mast cells.

It is found in the secreted. Effector cytokine of innate and adaptive immune system involved in antimicrobial host defense and maintenance of tissue integrity. IL17A-IL17F signals via IL17RA-IL17RC heterodimeric receptor complex, triggering homotypic interaction of IL17RA and IL17RC chains with TRAF3IP2 adapter through SEFIR domains. This leads to downstream TRAF6-mediated activation of NF-kappa-B and MAPkinase pathways ultimately resulting in transcriptional activation of cytokines, chemokines, antimicrobial peptides and matrix metalloproteinases, with potential strong immune inflammation. IL17A-IL17F is primarily involved in host defense against extracellular bacteria and fungi by inducing neutrophilic inflammation. As signature effector cytokine of T-helper 17 cells (Th17), primarily induces neutrophil activation and recruitment at infection and inflammatory sites. Stimulates the production of antimicrobial beta-defensins DEFB1, DEFB103A, and DEFB104A by mucosal epithelial cells, limiting the entry of microbes through the epithelial barriers. IL17F homodimer can signal via IL17RC homodimeric receptor complex, triggering downstream activation of TRAF6 and NF-kappa-B signaling pathway. Via IL17RC induces transcriptional activation of IL33, a potent cytokine that stimulates group 2 innate lymphoid cells and adaptive T-helper 2 cells involved in pulmonary allergic response to fungi. Likely via IL17RC, promotes sympathetic innervation of peripheral organs by coordinating the communication between gamma-delta T cells and parenchymal cells. Stimulates sympathetic innervation of thermogenic adipose tissue by driving TGFB1 expression. Regulates the composition of intestinal microbiota and immune tolerance by inducing antimicrobial proteins that specifically control the growth of commensal Firmicutes and Bacteroidetes. The polypeptide is Interleukin-17F (IL17F) (Homo sapiens (Human)).